We begin with the raw amino-acid sequence, 628 residues long: Protein ETHYLENE INSENSITIVE 3 (628 aa).

Positions 38-68 (EDDYTDDEIDVDELERRMWRDKMRLKRLKEQ) form a coiled coil. The span at 66-79 (KEQDKGKEGVDAAK) shows a compositional bias: basic and acidic residues. The disordered stretch occupies residues 66-92 (KEQDKGKEGVDAAKQRQSQEQARRKKM). Positions 174–306 (TPHTLQELQD…SLARELYPES (133 aa)) are DNA-binding domain.

The protein belongs to the EIN3 family. As to quaternary structure, acts as a homodimer to bind the primary ethylene response element. Interacts with TAF12B. Interacts with KIN10. Binds to ENAP1 in the presence of ethylene; this reaction facilitates its association with histone. Post-translationally, phosphorylated by KIN10.

Its subcellular location is the nucleus. With respect to regulation, activated by phosphorylation by MPK3 and MPK6. Down-regulated by KIN10 that controls its protein stability under a phosphorylation-dependent manner. Satnilitzed during hypoxia (e.g. submergences) via a ceramides-triggered and CTR1-dependent manner. In terms of biological role, transcription factor acting as a positive regulator in the ethylene response pathway, by promoting histone acetylation in an ENAP1-dependent manner, thus accelerating the expression of ethylene-responsive genes. Binds DNA. Is required for ethylene responsiveness in adult plant tissues. Binds a primary ethylene response element present in the ETHYLENE-RESPONSE-FACTOR1 promoter with consequence to activate the transcription of this gene. This Arabidopsis thaliana (Mouse-ear cress) protein is Protein ETHYLENE INSENSITIVE 3.